The chain runs to 431 residues: Glutamate-1-semialdehyde 2,1-aminomutase (431 aa).

Lys265 bears the N6-(pyridoxal phosphate)lysine mark.

It belongs to the class-III pyridoxal-phosphate-dependent aminotransferase family. HemL subfamily. As to quaternary structure, homodimer. It depends on pyridoxal 5'-phosphate as a cofactor.

Its subcellular location is the cytoplasm. The enzyme catalyses (S)-4-amino-5-oxopentanoate = 5-aminolevulinate. Its pathway is porphyrin-containing compound metabolism; protoporphyrin-IX biosynthesis; 5-aminolevulinate from L-glutamyl-tRNA(Glu): step 2/2. The protein is Glutamate-1-semialdehyde 2,1-aminomutase of Aliivibrio fischeri (strain ATCC 700601 / ES114) (Vibrio fischeri).